The following is a 205-amino-acid chain: Golgi to ER traffic protein 1 (205 aa).

Residues 1 to 9 (MFELQPSSI) are Lumenal-facing. The chain crosses the membrane as a helical span at residues 10 to 29 (VVLVFCVLAIKVCISLIGKT). Topologically, residues 30 to 116 (TIQDRIWYLY…QISKLVNLAI (87 aa)) are cytoplasmic. Residues 53–103 (ALAQKREELVRVNKERRAISAQDEYAKWTKLNRQFDKLNSEVNDLAEATSS) are a coiled coil. The helical transmembrane segment at 117–137 (AATTTAPIWFSRIWYRKVVLF) threads the bilayer. At 138 to 161 (YLPPKVFPYYIEWVLALPFIVTGG) the chain is on the lumenal side. A helical membrane pass occupies residues 162–178 (VGLTVWMFALNSVLSSL). Topologically, residues 179–205 (EFLIKFYLEEPVKKPEAPAASEAQTKQ) are cytoplasmic.

The protein belongs to the WRB/GET1 family. As to quaternary structure, component of the Golgi to ER traffic (GET) complex, which is composed of GET1, GET2 and GET3. Within the complex, GET1 and GET2 form a heterotetramer which is stabilized by phosphatidylinositol binding and which binds to the GET3 homodimer.

It localises to the endoplasmic reticulum membrane. It is found in the golgi apparatus membrane. In terms of biological role, required for the post-translational delivery of tail-anchored (TA) proteins to the endoplasmic reticulum. Together with GET2, acts as a membrane receptor for soluble GET3, which recognizes and selectively binds the transmembrane domain of TA proteins in the cytosol. The GET complex cooperates with the HDEL receptor ERD2 to mediate the ATP-dependent retrieval of resident ER proteins that contain a C-terminal H-D-E-L retention signal from the Golgi to the ER. This Clavispora lusitaniae (strain ATCC 42720) (Yeast) protein is Golgi to ER traffic protein 1.